Reading from the N-terminus, the 241-residue chain is F-box protein At3g22350 (241 aa).

Residues 1-44 (MSDLPLDLVEEILSRVSATSLKRLRSTCKQWNTLFKKRSFSQKH) form the F-box domain.

This Arabidopsis thaliana (Mouse-ear cress) protein is F-box protein At3g22350.